Consider the following 112-residue polypeptide: UPF0102 protein NIS_1551 (112 aa).

This sequence belongs to the UPF0102 family.

The polypeptide is UPF0102 protein NIS_1551 (Nitratiruptor sp. (strain SB155-2)).